We begin with the raw amino-acid sequence, 185 residues long: Ribosome-recycling factor (185 aa).

The protein belongs to the RRF family.

The protein resides in the cytoplasm. Its function is as follows. Responsible for the release of ribosomes from messenger RNA at the termination of protein biosynthesis. May increase the efficiency of translation by recycling ribosomes from one round of translation to another. This chain is Ribosome-recycling factor, found in Azoarcus sp. (strain BH72).